Reading from the N-terminus, the 269-residue chain is Oligoribonuclease, mitochondrial (269 aa).

In terms of domain architecture, Exonuclease spans 55–227; the sequence is LVWIDCEMTG…SDIKESIAQL (173 aa). Residue Y184 is part of the active site. Residues 240–269 form a disordered region; that stretch reads ETESVESIGSEQPESPSSSTSSLKRQRTDF. The segment covering 245-261 has biased composition (low complexity); the sequence is ESIGSEQPESPSSSTSS.

Belongs to the oligoribonuclease family.

The protein localises to the mitochondrion. In terms of biological role, 3'-to-5' exoribonuclease specific for small oligoribonucleotides. This Saccharomyces cerevisiae (strain ATCC 204508 / S288c) (Baker's yeast) protein is Oligoribonuclease, mitochondrial (REX2).